The following is a 1073-amino-acid chain: Transmembrane protein 132E (1073 aa).

Positions 1–33 (MGHFVVQGDLPWILCSLRLVIMIIAGKVSPTSS) are cleaved as a signal peptide. Over 34 to 899 (DALFSVPVPS…MTDLEIGMYA (866 aa)) the chain is Extracellular. The N-linked (GlcNAc...) asparagine glycan is linked to Asn102. A disordered region spans residues 246–270 (DPDSNDECGESYPRRGGPSRGESLS). N-linked (GlcNAc...) asparagine glycans are attached at residues Asn324, Asn396, and Asn746. A helical membrane pass occupies residues 900–920 (LLGVFCLAILVFLINCIVFVL). The Cytoplasmic segment spans residues 921–1073 (KYRHKRIPPE…DYMRRIKEIA (153 aa)). Residues 952-970 (TQSDLSPQTVESPSNTLEG) show a composition bias toward polar residues. Residues 952 to 1024 (TQSDLSPQTV…PTSKRKRVKF (73 aa)) are disordered. Over residues 982-994 (SGSSQTSVQSQVH) the composition is skewed to low complexity.

It belongs to the TMEM132 family.

The protein resides in the membrane. In terms of biological role, required for normal inner ear hair cell function and hearing. This is Transmembrane protein 132E (tmem132e) from Danio rerio (Zebrafish).